The primary structure comprises 247 residues: MFSPQQPMRNYPQPGPPRPMPNQRMMGRRPPNMRGPSFGAQQQGFQQAGQFLPQANAGARNGAGAGGGLKGMLSRFLPGGGGAGSAGVPGIPGAGAAASGGAGLQGIQNIANPASLSSMLGNVQKVLGMAQQVTPMIQQYGPLVRNLPAMMKLYSQLSKSDDTETEANEESEKQSVSEESSEKEKETETKTSDGNKKSKPKSSSLPKKSKTTDNKEQELKTSAPKKKEAASPAPKRTSGSSKPRLYI.

Low complexity-rich tracts occupy residues 1-12 (MFSPQQPMRNYP) and 21-43 (PNQR…AQQQ). Disordered stretches follow at residues 1 to 43 (MFSP…AQQQ) and 157 to 247 (LSKS…RLYI). Composition is skewed to basic and acidic residues over residues 170–196 (ESEK…DGNK) and 210–229 (KTTD…KKEA).

This is an uncharacterized protein from Bacillus subtilis (strain 168).